Consider the following 264-residue polypeptide: Probable septum site-determining protein MinC (264 aa).

Positions 103–147 (SHGRRPRGGNDAKDADRNDAQDAQGAPEHAQAAEAPASTSAIPPA) are disordered. The span at 110-122 (GGNDAKDADRNDA) shows a compositional bias: basic and acidic residues. Residues 124–147 (DAQGAPEHAQAAEAPASTSAIPPA) are compositionally biased toward low complexity.

The protein belongs to the MinC family. As to quaternary structure, interacts with MinD and FtsZ.

Its function is as follows. Cell division inhibitor that blocks the formation of polar Z ring septums. Rapidly oscillates between the poles of the cell to destabilize FtsZ filaments that have formed before they mature into polar Z rings. Prevents FtsZ polymerization. In Ralstonia pickettii (strain 12J), this protein is Probable septum site-determining protein MinC.